The chain runs to 695 residues: NADPH--cytochrome P450 reductase (695 aa).

Topologically, residues 1 to 8 are lumenal; sequence MAQLDTLD. A helical membrane pass occupies residues 9 to 31; the sequence is LVVLVALLVGSVAYFTKGTYWAV. The Cytoplasmic portion of the chain corresponds to 32–695; that stretch reads AKDPYASSGP…SGSYQEDVWS (664 aa). One can recognise a Flavodoxin-like domain in the interval 66 to 221; sequence CVIFYGSQTG…DFLAWKEPMW (156 aa). Residues 72–77, 123–126, 169–178, and Asp-204 contribute to the FMN site; these read SQTGTA, ATYG, and LGNNTYEHYN. One can recognise an FAD-binding FR-type domain in the interval 277-538; sequence HNPFIAPIVE…HVRHSNFKLP (262 aa). Residue Arg-296 participates in NADP(+) binding. Residues 451 to 454, 469 to 471, and 486 to 489 contribute to the FAD site; these read RYYS, TAV, and GVTT. NADP(+) is bound by residues Thr-552, 614 to 615, 620 to 624, and Glu-656; these read SR and KVYVQ. Residue Trp-694 coordinates FAD.

Belongs to the NADPH--cytochrome P450 reductase family. This sequence in the N-terminal section; belongs to the flavodoxin family. The protein in the C-terminal section; belongs to the flavoprotein pyridine nucleotide cytochrome reductase family. It depends on FAD as a cofactor. FMN serves as cofactor.

It localises to the endoplasmic reticulum membrane. It is found in the mitochondrion outer membrane. Its subcellular location is the cell membrane. It carries out the reaction 2 oxidized [cytochrome P450] + NADPH = 2 reduced [cytochrome P450] + NADP(+) + H(+). This enzyme is required for electron transfer from NADP to cytochrome P450 in microsomes. It can also provide electron transfer to heme oxygenase and cytochrome B5. Involved in ergosterol biosynthesis. This is NADPH--cytochrome P450 reductase from Aspergillus oryzae (strain ATCC 42149 / RIB 40) (Yellow koji mold).